Here is a 422-residue protein sequence, read N- to C-terminus: Phthiocerol/phthiodiolone dimycocerosyl transferase (422 aa).

His124 (proton acceptor) is an active-site residue.

Belongs to the acyltransferase PapA5 family. Monomer. Interacts directly with the acyl carrier protein (ACP) domain of the mycocerosic acid synthase (mas) protein.

The catalysed reaction is 2 a mycocerosyl-[mycocerosic acid synthase] + a phthiocerol = a dimycocerosyl phthiocerol + 2 holo-[mycocerosic acid synthase].. It carries out the reaction 2 a mycocerosyl-[mycocerosic acid synthase] + a phthiodiolone = a dimycocerosyl phthiodiolone + 2 holo-[mycocerosic acid synthase].. The enzyme catalyses 2 a mycocerosyl-[mycocerosic acid synthase] + a phenolphthiocerol = a dimycocerosyl phenolphthiocerol + 2 holo-[mycocerosic acid synthase].. Its function is as follows. Catalyzes diesterification of phthiocerol, phthiodiolone, and phenolphthiocerol with mycocerosic acids, the final step in the phthiocerol, phthiodiolone and phenolphthiocerol dimycocerosate esters (PDIM) synthesis. Can directly transfer the mycocerosate bound to the mycocerosic acid synthase (mas) onto the substrate alcohols. The sequence is that of Phthiocerol/phthiodiolone dimycocerosyl transferase (papA5) from Mycobacterium tuberculosis (strain ATCC 25177 / H37Ra).